Consider the following 381-residue polypeptide: Cytochrome b (381 aa).

4 helical membrane passes run 38–58 (FGSL…FLAM), 82–103 (WLLR…YFHI), 118–138 (WMTG…GYVL), and 183–203 (FFTF…IHLL). 2 residues coordinate heme b: H88 and H102. H187 and H201 together coordinate heme b. H206 lines the a ubiquinone pocket. 4 consecutive transmembrane segments (helical) span residues 231–251 (IKDT…SLTS), 293–313 (LGGV…PFTF), 325–345 (VAQP…WIGA), and 352–372 (YNFL…FTPI).

It belongs to the cytochrome b family. The main subunits of complex b-c1 are: cytochrome b, cytochrome c1 and the Rieske protein. It depends on heme b as a cofactor.

It localises to the mitochondrion inner membrane. Its function is as follows. Component of the ubiquinol-cytochrome c reductase complex (complex III or cytochrome b-c1 complex) that is part of the mitochondrial respiratory chain. The b-c1 complex mediates electron transfer from ubiquinol to cytochrome c. Contributes to the generation of a proton gradient across the mitochondrial membrane that is then used for ATP synthesis. The polypeptide is Cytochrome b (MT-CYB) (Artemia franciscana (Brine shrimp)).